The sequence spans 288 residues: Nucleotide-binding protein Veis_1053 (288 aa).

Residue 10-17 (GMSGSGKS) participates in ATP binding. 59–62 (DVRS) is a GTP binding site.

The protein belongs to the RapZ-like family.

Its function is as follows. Displays ATPase and GTPase activities. The polypeptide is Nucleotide-binding protein Veis_1053 (Verminephrobacter eiseniae (strain EF01-2)).